A 776-amino-acid chain; its full sequence is U3 small nucleolar RNA-associated protein 4 (776 aa).

6 WD repeats span residues 35–40 (RCRFVD), 132–169 (LPLR…VLID), 178–214 (EHDT…RIWS), 230–266 (KVDK…KFWD), 271–308 (TLNQ…FQFS), and 417–452 (VCKL…KVFH).

In terms of assembly, interacts with snoRNA U3. Interacts with MPP10. Component of the ribosomal small subunit (SSU) processome composed of at least 40 protein subunits and snoRNA U3. In the absence of snoRNA3, forms a complex with other t-UTPs. This complex can associate with pre-18S ribosomal RNAs.

It localises to the nucleus. The protein localises to the nucleolus. In terms of biological role, involved in nucleolar processing of pre-18S ribosomal RNA. Required for optimal pre-ribosomal RNA transcription by RNA polymerase I together with a subset of U3 proteins required for transcription (t-UTPs). This is U3 small nucleolar RNA-associated protein 4 (UTP4) from Saccharomyces cerevisiae (strain ATCC 204508 / S288c) (Baker's yeast).